The primary structure comprises 485 residues: Glutamate--tRNA ligase (485 aa).

Residues 11–21 carry the 'HIGH' region motif; that stretch reads PSPTGYMHVGN. 4 residues coordinate Zn(2+): C108, C110, C135, and D137. The 'KMSKS' region signature appears at 252–256; it reads KLSKR. Position 255 (K255) interacts with ATP.

Belongs to the class-I aminoacyl-tRNA synthetase family. Glutamate--tRNA ligase type 1 subfamily. As to quaternary structure, monomer. Requires Zn(2+) as cofactor.

It is found in the cytoplasm. The enzyme catalyses tRNA(Glu) + L-glutamate + ATP = L-glutamyl-tRNA(Glu) + AMP + diphosphate. Functionally, catalyzes the attachment of glutamate to tRNA(Glu) in a two-step reaction: glutamate is first activated by ATP to form Glu-AMP and then transferred to the acceptor end of tRNA(Glu). The protein is Glutamate--tRNA ligase of Clostridium botulinum (strain Loch Maree / Type A3).